The primary structure comprises 336 residues: Uridine nucleosidase 1 (336 aa).

Active-site residues include Asp29 and His260.

This sequence belongs to the IUNH family. Homodimer. Component of the NSH heterocomplex made of URH1/NSH1 and URH2/NSH2 which exhibits strong xanthosine nucleosidase activity. Interacts with URH2. As to expression, expressed ubiquitously in leaves, flowers, stems, pollen cells, root tip meristem and root vasculature.

The protein localises to the cytoplasm. The catalysed reaction is uridine + H2O = D-ribose + uracil. It carries out the reaction xanthosine + H2O = D-ribose + xanthine. The enzyme catalyses inosine + H2O = hypoxanthine + D-ribose. It catalyses the reaction adenosine + H2O = D-ribose + adenine. Involved in purine and pyrimidine breakdown rather than in pyrimidine salvage, especially in response to dark stress. Together with URH2, required for efficient inosine and xanthosine hydrolytic activities. Unable to use cytidine as a substrate. Can use uridine, inosine, adenosine as well as the cytokinin derivative isopentenyladenine-riboside as substrates. Also hydrolyzes xanthosine with high efficiency. This is Uridine nucleosidase 1 from Arabidopsis thaliana (Mouse-ear cress).